The primary structure comprises 663 residues: MAIPEEFDILVLGGGSSGSCIAGRLANLDHSLKVGLIEAGENNLNNPWVYLPGIYPRNMKLDSKTASFYTSNPSPHLNGRRAIVPCANVLGGGSSINFMMYTRGSASDYDDFQAEGWKTKDLLPLMKKTETYQRACNNPDIHGFEGPIKVSFGNYTYPVCQDFLRASESQGIPYVDDLEDLVTAHGAEHWLKWINRDTGRRSDSAHAFVHSTMRNHDNLYLICNTKVDKIIVEDGRAAAVRTVPSKPLNPKKPSHKIYRARKQIVLSCGTISSPLVLQRSGFGDPIKLRAAGVKPLVNLPGVGRNFQDHYCFFSPYRIKPQYESFDDFVRGDAEIQKRVFDQWYANGTGPLATNGIEAGVKIRPTPEELSQMDESFQEGYREYFEDKPDKPVMHYSIIAGFFGDHTKIPPGKYMTMFHFLEYPFSRGSIHITSPDPYAAPDFDPGFMNDERDMAPMVWAYKKSRETARRMDHFAGEVTSHHPLFPYSSEARALEMDLETSNAYGGPLNLSAGLAHGSWTQPLKKPTAKNEGHVTSNQVELHPDIEYDEEDDKAIENYIREHTETTWHCLGTCSIGPREGSKIVKWGGVLDHRSNVYGVKGLKVGDLSVCPDNVGCNTYTTALLIGEKTATLVGEDLGYSGEALDMTVPQFKLGTYEKTGLARF.

Position 8–38 (8–38 (DILVLGGGSSGSCIAGRLANLDHSLKVGLIE)) interacts with FAD. Catalysis depends on histidine 567, which acts as the Proton acceptor. Positions 661-663 (ARF) match the Microbody targeting signal motif.

The protein belongs to the GMC oxidoreductase family. As to quaternary structure, homooctamer. The cofactor is FAD.

The protein localises to the peroxisome matrix. It catalyses the reaction a primary alcohol + O2 = an aldehyde + H2O2. It functions in the pathway energy metabolism; methane degradation. Major isoform of alcohol oxidase, which catalyzes the oxidation of methanol to formaldehyde and hydrogen peroxide, the first step in the methanol utilization pathway of methylotrophic yeasts. The chain is Alcohol oxidase 1 (AOX1) from Komagataella phaffii (strain ATCC 76273 / CBS 7435 / CECT 11047 / NRRL Y-11430 / Wegner 21-1) (Yeast).